Reading from the N-terminus, the 195-residue chain is Nucleoside triphosphate pyrophosphatase (195 aa).

Catalysis depends on Asp-76, which acts as the Proton acceptor.

Belongs to the Maf family. Requires a divalent metal cation as cofactor.

The protein resides in the cytoplasm. The enzyme catalyses a ribonucleoside 5'-triphosphate + H2O = a ribonucleoside 5'-phosphate + diphosphate + H(+). It carries out the reaction a 2'-deoxyribonucleoside 5'-triphosphate + H2O = a 2'-deoxyribonucleoside 5'-phosphate + diphosphate + H(+). Nucleoside triphosphate pyrophosphatase. May have a dual role in cell division arrest and in preventing the incorporation of modified nucleotides into cellular nucleic acids. The polypeptide is Nucleoside triphosphate pyrophosphatase (Pelagibacter ubique (strain HTCC1062)).